We begin with the raw amino-acid sequence, 193 residues long: Phosphoheptose isomerase (193 aa).

The 157-residue stretch at 37 to 193 folds into the SIS domain; sequence LANAFKAGGK…QLIEKEMADQ (157 aa). 52 to 54 provides a ligand contact to substrate; it reads NGG. 2 residues coordinate Zn(2+): His-61 and Glu-65. Substrate-binding positions include Glu-65, 93–94, 119–121, Ser-124, and Gln-172; these read ND and STS. Residues Gln-172 and His-180 each coordinate Zn(2+).

Belongs to the SIS family. GmhA subfamily. Homotetramer. The cofactor is Zn(2+).

Its subcellular location is the cytoplasm. It carries out the reaction 2 D-sedoheptulose 7-phosphate = D-glycero-alpha-D-manno-heptose 7-phosphate + D-glycero-beta-D-manno-heptose 7-phosphate. It functions in the pathway carbohydrate biosynthesis; D-glycero-D-manno-heptose 7-phosphate biosynthesis; D-glycero-alpha-D-manno-heptose 7-phosphate and D-glycero-beta-D-manno-heptose 7-phosphate from sedoheptulose 7-phosphate: step 1/1. In terms of biological role, catalyzes the isomerization of sedoheptulose 7-phosphate in D-glycero-D-manno-heptose 7-phosphate. The protein is Phosphoheptose isomerase of Pectobacterium atrosepticum (strain SCRI 1043 / ATCC BAA-672) (Erwinia carotovora subsp. atroseptica).